A 550-amino-acid polypeptide reads, in one-letter code: Beta-cubebene synthase (550 aa).

Residues aspartate 303, aspartate 307, aspartate 447, and glutamate 455 each contribute to the Mg(2+) site. Positions aspartate 303–aspartate 307 match the DDXXD motif motif.

Belongs to the terpene synthase family. Tpsa subfamily. Mg(2+) serves as cofactor. As to expression, expressed in young developing leaves and in stamens. Not detected in tepals and carpels.

It catalyses the reaction (2E,6E)-farnesyl diphosphate = beta-cubebene + diphosphate. The protein operates within secondary metabolite biosynthesis; terpenoid biosynthesis. Its function is as follows. Sesquiterpene synthase converting farnesyl diphosphate into beta-cubebene (24.5%), alpha-muurolene (19.3%), delta-cadinol (18.6%), delta-elemene (16.0%), tau-muurolene (10.8%), and beta-elemene (10.8%). No activity with geranyl diphosphate or geranylgeranyl diphosphate. This Magnolia grandiflora (Southern magnolia) protein is Beta-cubebene synthase.